The primary structure comprises 226 residues: Agamous-like MADS-box protein AP3 (226 aa).

The 61-residue stretch at 1 to 61 (MARGKIEIKR…GKLHEYISPS (61 aa)) folds into the MADS-box domain. Positions 84 to 174 (YERMQENLKK…LHEFDARDRD (91 aa)) constitute a K-box domain.

As to expression, expressed during flower development in stamens and petals.

The protein resides in the nucleus. Functionally, probable transcription factor involved in flower development. The polypeptide is Agamous-like MADS-box protein AP3 (Vitis vinifera (Grape)).